Reading from the N-terminus, the 221-residue chain is Transcriptional regulator GfcR (221 aa).

The interval 35 to 59 (ASWLVERSQPTDNSQSSSANNPTEA) is disordered. The segment covering 42 to 57 (SQPTDNSQSSSANNPT) has biased composition (polar residues).

Belongs to the purine/pyrimidine phosphoribosyltransferase family. GfcR subfamily.

Its function is as follows. DNA-binding transcriptional regulator that functions as a regulator of central sugar catabolic pathways. The chain is Transcriptional regulator GfcR from Haloquadratum walsbyi (strain DSM 16790 / HBSQ001).